The following is a 715-amino-acid chain: ATP-dependent DNA helicase Hel308 (715 aa).

ATP contacts are provided by residues Q35 and 53–60 (SPTGSGKT). The Helicase ATP-binding domain occupies 40-203 (KKGLLDGNRL…WLGAEPVATN (164 aa)). A DEAH box motif is present at residues 152–155 (DELH). Residues 236-442 (HGDDAIIAYT…ERAFYTFLLG (207 aa)) form the Helicase C-terminal domain.

This sequence belongs to the helicase family. Hel308 subfamily. In terms of assembly, monomer. Interacts with PINA ATPase which decreases both DNA helicase activities of this protein.

It carries out the reaction Couples ATP hydrolysis with the unwinding of duplex DNA by translocating in the 3'-5' direction.. The catalysed reaction is ATP + H2O = ADP + phosphate + H(+). It catalyses the reaction Couples ATP hydrolysis with the unwinding of duplex DNA at the replication fork by translocating in the 5'-3' direction. This creates two antiparallel DNA single strands (ssDNA). The leading ssDNA polymer is the template for DNA polymerase III holoenzyme which synthesizes a continuous strand.. PINA inhibits the (weak) 5'-3' but not the 3'-5' helicase activity of this protein on overhang substrates. Functionally, DNA-dependent ATPase and 3'-5' DNA helicase that may be involved in repair of stalled replication forks. Its function is as follows. Has predominantly 3'-5' helicase activity but also a weak 5'-3' helicase activity. Has the ability to unwind replication forks, preferentially removing the lagging strand. Hjc, Hjm (Hel308) and branch migration ATPase PINA coordinate HJ migration and cleavage of replication forks in a coordinated way. This chain is ATP-dependent DNA helicase Hel308, found in Saccharolobus islandicus (strain REY15A) (Sulfolobus islandicus).